The following is a 144-amino-acid chain: ATP synthase epsilon chain (144 aa).

This sequence belongs to the ATPase epsilon chain family. F-type ATPases have 2 components, CF(1) - the catalytic core - and CF(0) - the membrane proton channel. CF(1) has five subunits: alpha(3), beta(3), gamma(1), delta(1), epsilon(1). CF(0) has three main subunits: a, b and c.

Its subcellular location is the cell inner membrane. Functionally, produces ATP from ADP in the presence of a proton gradient across the membrane. The polypeptide is ATP synthase epsilon chain (Ectopseudomonas mendocina (strain ymp) (Pseudomonas mendocina)).